A 140-amino-acid chain; its full sequence is Nucleoside diphosphate kinase (140 aa).

Positions 11, 59, 87, 93, 104, and 114 each coordinate ATP. The active-site Pros-phosphohistidine intermediate is His-117.

The protein belongs to the NDK family. Homotetramer. It depends on Mg(2+) as a cofactor.

It localises to the cytoplasm. It carries out the reaction a 2'-deoxyribonucleoside 5'-diphosphate + ATP = a 2'-deoxyribonucleoside 5'-triphosphate + ADP. The enzyme catalyses a ribonucleoside 5'-diphosphate + ATP = a ribonucleoside 5'-triphosphate + ADP. Major role in the synthesis of nucleoside triphosphates other than ATP. The ATP gamma phosphate is transferred to the NDP beta phosphate via a ping-pong mechanism, using a phosphorylated active-site intermediate. The protein is Nucleoside diphosphate kinase of Rickettsia felis (strain ATCC VR-1525 / URRWXCal2) (Rickettsia azadi).